The chain runs to 261 residues: Phosphatidylglycerol--prolipoprotein diacylglyceryl transferase (261 aa).

4 consecutive transmembrane segments (helical) span residues 17-37, 59-79, 94-114, and 121-141; these read FAIHWYGVMYLLAFAQFLLLG, LLFAGVLGVVLGGRLGYTLFY, IWEGGMSFHGGLLGVLCALLW, and TSFFVVSDLVAPLIPFGLAFG. A 1,2-diacyl-sn-glycero-3-phospho-(1'-sn-glycerol) is bound at residue Arg-142. Transmembrane regions (helical) follow at residues 174 to 194 and 228 to 248; these read PSQIYQLLGEGIFLGIVLWIY and FLGLLGLGLSMGQWLCVPMII.

It belongs to the Lgt family.

The protein resides in the cell inner membrane. It carries out the reaction L-cysteinyl-[prolipoprotein] + a 1,2-diacyl-sn-glycero-3-phospho-(1'-sn-glycerol) = an S-1,2-diacyl-sn-glyceryl-L-cysteinyl-[prolipoprotein] + sn-glycerol 1-phosphate + H(+). The protein operates within protein modification; lipoprotein biosynthesis (diacylglyceryl transfer). Catalyzes the transfer of the diacylglyceryl group from phosphatidylglycerol to the sulfhydryl group of the N-terminal cysteine of a prolipoprotein, the first step in the formation of mature lipoproteins. The sequence is that of Phosphatidylglycerol--prolipoprotein diacylglyceryl transferase from Polynucleobacter asymbioticus (strain DSM 18221 / CIP 109841 / QLW-P1DMWA-1) (Polynucleobacter necessarius subsp. asymbioticus).